The sequence spans 329 residues: Ribosomal RNA small subunit methyltransferase H (329 aa).

S-adenosyl-L-methionine contacts are provided by residues glycine 47–histidine 49, aspartate 67, phenylalanine 93, aspartate 115, and glutamine 122.

It belongs to the methyltransferase superfamily. RsmH family.

The protein localises to the cytoplasm. The enzyme catalyses cytidine(1402) in 16S rRNA + S-adenosyl-L-methionine = N(4)-methylcytidine(1402) in 16S rRNA + S-adenosyl-L-homocysteine + H(+). Specifically methylates the N4 position of cytidine in position 1402 (C1402) of 16S rRNA. The sequence is that of Ribosomal RNA small subunit methyltransferase H from Blochmanniella pennsylvanica (strain BPEN).